The chain runs to 360 residues: UPF0283 membrane protein Oant_2119 (360 aa).

The tract at residues 1–30 is disordered; that stretch reads MTEKTPRKPASFTVSQASNRPEAADEAPRR. 2 helical membrane-spanning segments follow: residues 77–97 and 108–128; these read ILFGALGILVSFAIGIWTEDL and LGWTALGVAIIALAAFIAIVV.

Belongs to the UPF0283 family.

Its subcellular location is the cell inner membrane. This is UPF0283 membrane protein Oant_2119 from Brucella anthropi (strain ATCC 49188 / DSM 6882 / CCUG 24695 / JCM 21032 / LMG 3331 / NBRC 15819 / NCTC 12168 / Alc 37) (Ochrobactrum anthropi).